Reading from the N-terminus, the 110-residue chain is Evasin P1166 (110 aa).

An N-terminal signal peptide occupies residues 1 to 24 (MEVKIFTLLQIALFIALGIHLVVA). 3 disulfide bridges follow: C45–C67, C49–C69, and C60–C80. A glycan (N-linked (GlcNAc...) asparagine) is linked at N48. The segment at 89-110 (SEYPNPKSSEIDAAAPLPRETH) is disordered.

The protein resides in the secreted. Functionally, salivary chemokine-binding protein which binds to host chemokines CXCL1, CXCL2 and CXCL8. This is Evasin P1166 from Ixodes ricinus (Common tick).